The chain runs to 324 residues: MTITTSKQLPSLAQLPETYLIELSEFGAISLSGEEQSKYLQGQVTCDVNSITESNLLVGAHCDAKGKVFSVFRLINRSSAHLLLQPTASIEGSLKELKKFGVFAKVTIDIAEELGFIALIGKQASSLIQQEFSQVPDSLTPVVQIGSTSLVYLSGEQPRYIIIDDKATITAITEKLALPTYSQSVWNLLEITQGFPILTANTSGHYVPQMLNLQAINGISFTKGCYLGQETVARMQYLGKNKRALFCLNSQLEQPFQSDDVIEKQLGENWRKAGDILAHYQADDGSCVIQAILANDGDLPILRIASQADSVVTNQTLPYTLIAE.

W186 contributes to the folate binding site.

Belongs to the tRNA-modifying YgfZ family.

It localises to the cytoplasm. Folate-binding protein involved in regulating the level of ATP-DnaA and in the modification of some tRNAs. It is probably a key factor in regulatory networks that act via tRNA modification, such as initiation of chromosomal replication. The chain is tRNA-modifying protein YgfZ from Colwellia psychrerythraea (strain 34H / ATCC BAA-681) (Vibrio psychroerythus).